The sequence spans 389 residues: D-alanine--D-alanine ligase (389 aa).

Residues 1 to 12 (MSTENLPQNPEQ) are compositionally biased toward polar residues. The interval 1 to 22 (MSTENLPQNPEQSPRRPPRKPR) is disordered. Residues 169-379 (KAVFTSYGLK…YPELVDRLVQ (211 aa)) enclose the ATP-grasp domain. Position 205 to 260 (205 to 260 (AGEHGWPLFVKPARAGSSIGITKVDDLAGLDEAIEEARRHDPKILVEAALRGREIE)) interacts with ATP. 3 residues coordinate Mg(2+): aspartate 333, glutamate 346, and asparagine 348.

The protein belongs to the D-alanine--D-alanine ligase family. The cofactor is Mg(2+). Mn(2+) is required as a cofactor.

Its subcellular location is the cytoplasm. It catalyses the reaction 2 D-alanine + ATP = D-alanyl-D-alanine + ADP + phosphate + H(+). It participates in cell wall biogenesis; peptidoglycan biosynthesis. Its function is as follows. Cell wall formation. The sequence is that of D-alanine--D-alanine ligase (ddl) from Streptomyces coelicolor (strain ATCC BAA-471 / A3(2) / M145).